A 321-amino-acid polypeptide reads, in one-letter code: Sialic acid-binding periplasmic protein SiaP (321 aa).

The first 22 residues, 1 to 22 (MKTINKITIAILTLSAAASVNA), serve as a signal peptide directing secretion.

Belongs to the bacterial solute-binding protein 7 family. In terms of assembly, the complex comprises the extracytoplasmic solute receptor protein SiaP, and the two transmembrane proteins SiaQ and SiaM.

It localises to the periplasm. In terms of biological role, part of the tripartite ATP-independent periplasmic (TRAP) transport system SiaPQM that catalyzes unidirectional Na(+)-dependent sialic acid uptake. Binds the common sialic acid N-acetylneuraminic acid (Neu5Ac) with a high affinity. The chain is Sialic acid-binding periplasmic protein SiaP from Vibrio cholerae serotype O1 (strain ATCC 39315 / El Tor Inaba N16961).